Consider the following 181-residue polypeptide: Adenine phosphoribosyltransferase (181 aa).

It belongs to the purine/pyrimidine phosphoribosyltransferase family. In terms of assembly, homodimer.

The protein resides in the cytoplasm. The catalysed reaction is AMP + diphosphate = 5-phospho-alpha-D-ribose 1-diphosphate + adenine. The protein operates within purine metabolism; AMP biosynthesis via salvage pathway; AMP from adenine: step 1/1. Functionally, catalyzes a salvage reaction resulting in the formation of AMP, that is energically less costly than de novo synthesis. In Rhodopseudomonas palustris (strain ATCC BAA-98 / CGA009), this protein is Adenine phosphoribosyltransferase.